The sequence spans 345 residues: Chorismate synthase (345 aa).

The protein belongs to the chorismate synthase family. As to quaternary structure, homotetramer. Requires FMNH2 as cofactor.

It carries out the reaction 5-O-(1-carboxyvinyl)-3-phosphoshikimate = chorismate + phosphate. The protein operates within metabolic intermediate biosynthesis; chorismate biosynthesis; chorismate from D-erythrose 4-phosphate and phosphoenolpyruvate: step 7/7. In Carsonella ruddii (strain PV), this protein is Chorismate synthase (aroC).